Here is a 485-residue protein sequence, read N- to C-terminus: NADH-quinone oxidoreductase subunit N (485 aa).

The next 14 helical transmembrane spans lie at 8 to 28, 35 to 55, 75 to 95, 105 to 125, 127 to 147, 159 to 179, 203 to 223, 235 to 255, 271 to 291, 297 to 317, 326 to 346, 373 to 393, 408 to 427, and 449 to 469; these read LIALLPLLIVGLTVVVVMLSI, FVNATLAVVGLNLALFSLYFV, FYTGLVILASLATCTFAYPWL, FYLLVLIAALGGVVLASASHL, SLFIGIELISLPLFGLVGYAF, YTILSAAASSFLLFGMALVYA, LLAGLGLMIVGFGFKLSLVPF, PAPVSTFLATASKIAIFGVLM, TVLGIIAVASMLFGNLMAISQ, LLGYSSIAHLGYLLVALIAVQ, VGVYLAGYLFSSLGAFGVVSL, AAVMTVMMLSLAGIPMTLGFI, WWLTGAVVLGSAIGLYYYLR, and AFTAGGVVVLISAILVLVLGI.

Belongs to the complex I subunit 2 family. In terms of assembly, NDH-1 is composed of 13 different subunits. Subunits NuoA, H, J, K, L, M, N constitute the membrane sector of the complex.

Its subcellular location is the cell inner membrane. The enzyme catalyses a quinone + NADH + 5 H(+)(in) = a quinol + NAD(+) + 4 H(+)(out). NDH-1 shuttles electrons from NADH, via FMN and iron-sulfur (Fe-S) centers, to quinones in the respiratory chain. The immediate electron acceptor for the enzyme in this species is believed to be ubiquinone. Couples the redox reaction to proton translocation (for every two electrons transferred, four hydrogen ions are translocated across the cytoplasmic membrane), and thus conserves the redox energy in a proton gradient. In Erwinia tasmaniensis (strain DSM 17950 / CFBP 7177 / CIP 109463 / NCPPB 4357 / Et1/99), this protein is NADH-quinone oxidoreductase subunit N.